The sequence spans 120 residues: Ribosome-binding factor A (120 aa).

Belongs to the RbfA family. As to quaternary structure, monomer. Binds 30S ribosomal subunits, but not 50S ribosomal subunits or 70S ribosomes.

It localises to the cytoplasm. One of several proteins that assist in the late maturation steps of the functional core of the 30S ribosomal subunit. Associates with free 30S ribosomal subunits (but not with 30S subunits that are part of 70S ribosomes or polysomes). Required for efficient processing of 16S rRNA. May interact with the 5'-terminal helix region of 16S rRNA. This is Ribosome-binding factor A from Chlorobaculum parvum (strain DSM 263 / NCIMB 8327) (Chlorobium vibrioforme subsp. thiosulfatophilum).